The primary structure comprises 205 residues: Small ribosomal subunit protein uS4 (205 aa).

The segment at 18-49 is disordered; it reads NIWGRPKSPVNKREYGPGQHGQRRKGKLSDFG. One can recognise an S4 RNA-binding domain in the interval 94–157; it reads RRLDAIVYRA…KQLALVLEAN (64 aa).

This sequence belongs to the universal ribosomal protein uS4 family. As to quaternary structure, part of the 30S ribosomal subunit. Contacts protein S5. The interaction surface between S4 and S5 is involved in control of translational fidelity.

One of the primary rRNA binding proteins, it binds directly to 16S rRNA where it nucleates assembly of the body of the 30S subunit. In terms of biological role, with S5 and S12 plays an important role in translational accuracy. The chain is Small ribosomal subunit protein uS4 from Afipia carboxidovorans (strain ATCC 49405 / DSM 1227 / KCTC 32145 / OM5) (Oligotropha carboxidovorans).